Consider the following 201-residue polypeptide: Elongation factor Ts (201 aa).

The segment at 81-84 (TDFV) is involved in Mg(2+) ion dislocation from EF-Tu.

This sequence belongs to the EF-Ts family.

It is found in the cytoplasm. In terms of biological role, associates with the EF-Tu.GDP complex and induces the exchange of GDP to GTP. It remains bound to the aminoacyl-tRNA.EF-Tu.GTP complex up to the GTP hydrolysis stage on the ribosome. This chain is Elongation factor Ts, found in Syntrophus aciditrophicus (strain SB).